The primary structure comprises 894 residues: Exocyst complex component 2 (894 aa).

Residues 5–89 enclose the IPT/TIG domain; it reads PVVTGLSPKE…GTSTVQFRAY (85 aa). Residues 398–413 show a composition bias toward basic and acidic residues; it reads HTSKDSGAQEKAKNRD. Residues 398–417 are disordered; that stretch reads HTSKDSGAQEKAKNRDSSQA.

Belongs to the SEC5 family. As to quaternary structure, the exocyst complex is composed of Sec3/Exoc1, Sec5/Exoc2, Sec6/Exoc3, Sec8/Exoc4, Sec10/Exoc5, Sec15/Exoc6, Exo70/Exoc7 and Exo84/Exoc8.

Functionally, component of the exocyst complex involved in the docking of exocytic vesicles with fusion sites on the plasma membrane. The chain is Exocyst complex component 2 from Drosophila melanogaster (Fruit fly).